We begin with the raw amino-acid sequence, 142 residues long: Protein OrfX1 (142 aa).

This sequence belongs to the TULIP P47 family. In terms of assembly, orfX1 was not detected as part of a crude toxin extract that includes BoNTA2/NTNH, P47, OrfX2 and OrfX3.

Part of a botulinum neurotoxin type A2 (BoNT) locus; may be part of a progenitor toxin complex required to protect BoNT during its passage through the host gastrointestinal tract. Binds phosphatidylinositol (3,4) bisphosphate, phosphatidylethanolamine and phosphatidylserine. The protein is Protein OrfX1 (orfX1) of Clostridium botulinum (strain Kyoto / Type A2).